A 241-amino-acid polypeptide reads, in one-letter code: UDP-2,3-diacylglucosamine hydrolase (241 aa).

Mn(2+)-binding residues include Asp-9, His-11, Asp-42, Asn-79, and His-114. 79–80 (NR) contributes to the substrate binding site. Substrate contacts are provided by Asp-122, Ser-160, Asn-164, Lys-167, and His-195. Mn(2+) contacts are provided by His-195 and His-197.

Belongs to the LpxH family. It depends on Mn(2+) as a cofactor.

The protein resides in the cell inner membrane. It catalyses the reaction UDP-2-N,3-O-bis[(3R)-3-hydroxytetradecanoyl]-alpha-D-glucosamine + H2O = 2-N,3-O-bis[(3R)-3-hydroxytetradecanoyl]-alpha-D-glucosaminyl 1-phosphate + UMP + 2 H(+). It participates in glycolipid biosynthesis; lipid IV(A) biosynthesis; lipid IV(A) from (3R)-3-hydroxytetradecanoyl-[acyl-carrier-protein] and UDP-N-acetyl-alpha-D-glucosamine: step 4/6. Functionally, hydrolyzes the pyrophosphate bond of UDP-2,3-diacylglucosamine to yield 2,3-diacylglucosamine 1-phosphate (lipid X) and UMP by catalyzing the attack of water at the alpha-P atom. Involved in the biosynthesis of lipid A, a phosphorylated glycolipid that anchors the lipopolysaccharide to the outer membrane of the cell. The sequence is that of UDP-2,3-diacylglucosamine hydrolase from Shewanella frigidimarina (strain NCIMB 400).